We begin with the raw amino-acid sequence, 128 residues long: Probable 4-amino-4-deoxy-L-arabinose-phosphoundecaprenol flippase subunit ArnF (128 aa).

Residues 1 to 2 (MC) are Cytoplasmic-facing. A helical membrane pass occupies residues 3–23 (LIWGLFSVIIASVAQLSLGFA). At 24–35 (ASHLPPMTHLWD) the chain is on the periplasmic side. Residues 36 to 56 (FIAALLAFGLDARILLLGLLG) form a helical membrane-spanning segment. Topologically, residues 57-76 (YLLSVFCWYKTLHKLALSKA) are cytoplasmic. A helical membrane pass occupies residues 77 to 97 (YALLSMSYVLVWIASMVLPGW). The Periplasmic segment spans residues 98-100 (EGT). A helical membrane pass occupies residues 101–121 (FSLKALLGVACIMSGLMLIFL). Residues 122-128 (PTTKQRY) lie on the Cytoplasmic side of the membrane.

This sequence belongs to the ArnF family. In terms of assembly, heterodimer of ArnE and ArnF.

The protein resides in the cell inner membrane. It functions in the pathway bacterial outer membrane biogenesis; lipopolysaccharide biosynthesis. Translocates 4-amino-4-deoxy-L-arabinose-phosphoundecaprenol (alpha-L-Ara4N-phosphoundecaprenol) from the cytoplasmic to the periplasmic side of the inner membrane. The protein is Probable 4-amino-4-deoxy-L-arabinose-phosphoundecaprenol flippase subunit ArnF of Shigella flexneri.